The following is a 1051-amino-acid chain: Carbamoyl phosphate synthase large chain (1051 aa).

The segment at Met-1–Asp-399 is carboxyphosphate synthetic domain. The ATP site is built by Arg-127, Arg-167, Gly-173, Gly-174, Lys-206, Leu-208, Glu-213, Gly-239, Val-240, His-241, Gln-282, and Glu-296. Positions Arg-131–Leu-325 constitute an ATP-grasp 1 domain. Mg(2+)-binding residues include Gln-282, Glu-296, and Asn-298. Residues Gln-282, Glu-296, and Asn-298 each coordinate Mn(2+). The interval Ile-400–Leu-548 is oligomerization domain. Residues Glu-549 to Asn-930 form a carbamoyl phosphate synthetic domain region. Residues Ser-673–Phe-863 enclose the ATP-grasp 2 domain. 10 residues coordinate ATP: Arg-709, Lys-748, Ile-750, Glu-755, Gly-779, Val-780, His-781, Ser-782, Gln-822, and Glu-834. Residues Gln-822, Glu-834, and Asn-836 each contribute to the Mg(2+) site. Residues Gln-822, Glu-834, and Asn-836 each contribute to the Mn(2+) site. In terms of domain architecture, MGS-like spans Asn-930–Ile-1051. Positions Arg-931 to Ile-1051 are allosteric domain.

Belongs to the CarB family. As to quaternary structure, composed of two chains; the small (or glutamine) chain promotes the hydrolysis of glutamine to ammonia, which is used by the large (or ammonia) chain to synthesize carbamoyl phosphate. Tetramer of heterodimers (alpha,beta)4. Mg(2+) serves as cofactor. It depends on Mn(2+) as a cofactor.

The catalysed reaction is hydrogencarbonate + L-glutamine + 2 ATP + H2O = carbamoyl phosphate + L-glutamate + 2 ADP + phosphate + 2 H(+). It carries out the reaction hydrogencarbonate + NH4(+) + 2 ATP = carbamoyl phosphate + 2 ADP + phosphate + 2 H(+). The protein operates within amino-acid biosynthesis; L-arginine biosynthesis; carbamoyl phosphate from bicarbonate: step 1/1. It functions in the pathway pyrimidine metabolism; UMP biosynthesis via de novo pathway; (S)-dihydroorotate from bicarbonate: step 1/3. Large subunit of the glutamine-dependent carbamoyl phosphate synthetase (CPSase). CPSase catalyzes the formation of carbamoyl phosphate from the ammonia moiety of glutamine, carbonate, and phosphate donated by ATP, constituting the first step of 2 biosynthetic pathways, one leading to arginine and/or urea and the other to pyrimidine nucleotides. The large subunit (synthetase) binds the substrates ammonia (free or transferred from glutamine from the small subunit), hydrogencarbonate and ATP and carries out an ATP-coupled ligase reaction, activating hydrogencarbonate by forming carboxy phosphate which reacts with ammonia to form carbamoyl phosphate. The protein is Carbamoyl phosphate synthase large chain of Saccharolobus islandicus (strain M.16.4 / Kamchatka #3) (Sulfolobus islandicus).